A 547-amino-acid polypeptide reads, in one-letter code: Apicoplast pyruvate carrier 1 (547 aa).

Positions 1–33 (MEPRAPPRLSVSSPRRESGATVPSHSPSTLLSC) are disordered. At 1 to 45 (MEPRAPPRLSVSSPRRESGATVPSHSPSTLLSCASSETATEKRRR) the chain is on the cytoplasmic side. A compositionally biased stretch (polar residues) spans 21–33 (TVPSHSPSTLLSC). Helical transmembrane passes span 46–66 (WTGV…GTVY), 126–146 (AWVL…GGIA), 167–187 (VGMA…FGVI), 189–209 (GVGL…WFPE), 212–232 (GIVS…FSPL), 278–298 (LLAV…RVPA), 345–365 (ALVS…GLAI), 385–405 (ILTE…NAVG), 417–437 (GFQT…FFLP), 445–465 (LCYA…FSVF), 467–487 (SAVA…FIFG), and 515–535 (LMGL…ALSP).

It belongs to the major facilitator superfamily. Interacts with apicoplast pyruvate carrier 2.

The protein resides in the plastid. Its subcellular location is the apicoplast. It localises to the membrane. Along with apicoplast pyruvate carrier 2, forms apicoplast pyruvate carrier (APC) complex, which transports pyruvate into the apicoplast and may also transport amino acids like methionine, serine, glycine and tryptophan with low efficiency. Required for maintaining pyruvate-dependent metabolic activities in the apicoplast, such as synthesis of fatty acids, isopentenyl pyrophosphate (IPP), dimethylallyl pyrophosphate (DMAPP) and methylerythritol 4-phosphate (MEP). Required for maintaining the integrity of the apicoplast. Required for normal parasite growth. The protein is Apicoplast pyruvate carrier 1 of Toxoplasma gondii.